Here is a 146-residue protein sequence, read N- to C-terminus: Ribonuclease H (146 aa).

The RNase H type-1 domain occupies 4-145 (ELNKVVIYTD…ADMLARSQIV (142 aa)). Aspartate 13, glutamate 51, aspartate 73, and aspartate 137 together coordinate Mg(2+).

This sequence belongs to the RNase H family. In terms of assembly, monomer. Requires Mg(2+) as cofactor.

The protein localises to the cytoplasm. It carries out the reaction Endonucleolytic cleavage to 5'-phosphomonoester.. Its function is as follows. Endonuclease that specifically degrades the RNA of RNA-DNA hybrids. This Ehrlichia chaffeensis (strain ATCC CRL-10679 / Arkansas) protein is Ribonuclease H.